The following is a 448-amino-acid chain: N-succinylarginine dihydrolase (448 aa).

Substrate is bound by residues A19 to S28, N110, and H137 to R138. E174 is an active-site residue. R216 provides a ligand contact to substrate. Residue H252 is part of the active site. Substrate is bound by residues D254 and N366. Residue C372 is the Nucleophile of the active site.

Belongs to the succinylarginine dihydrolase family. As to quaternary structure, homodimer.

The catalysed reaction is N(2)-succinyl-L-arginine + 2 H2O + 2 H(+) = N(2)-succinyl-L-ornithine + 2 NH4(+) + CO2. It functions in the pathway amino-acid degradation; L-arginine degradation via AST pathway; L-glutamate and succinate from L-arginine: step 2/5. Catalyzes the hydrolysis of N(2)-succinylarginine into N(2)-succinylornithine, ammonia and CO(2). This is N-succinylarginine dihydrolase from Legionella pneumophila (strain Paris).